A 497-amino-acid polypeptide reads, in one-letter code: Glycerol kinase (497 aa).

Thr-11 contributes to the ADP binding site. Positions 11, 12, and 13 each coordinate ATP. Thr-11 serves as a coordination point for sn-glycerol 3-phosphate. Arg-15 lines the ADP pocket. Residues Arg-81, Glu-82, Tyr-134, and Asp-244 each contribute to the sn-glycerol 3-phosphate site. Residues Arg-81, Glu-82, Tyr-134, Asp-244, and Gln-245 each coordinate glycerol. Residues Thr-266 and Gly-309 each coordinate ADP. ATP is bound by residues Thr-266, Gly-309, Gln-313, and Gly-410. Positions 410 and 414 each coordinate ADP.

This sequence belongs to the FGGY kinase family.

It carries out the reaction glycerol + ATP = sn-glycerol 3-phosphate + ADP + H(+). Its pathway is polyol metabolism; glycerol degradation via glycerol kinase pathway; sn-glycerol 3-phosphate from glycerol: step 1/1. Its activity is regulated as follows. Inhibited by fructose 1,6-bisphosphate (FBP). Key enzyme in the regulation of glycerol uptake and metabolism. Catalyzes the phosphorylation of glycerol to yield sn-glycerol 3-phosphate. This chain is Glycerol kinase, found in Fusobacterium nucleatum subsp. nucleatum (strain ATCC 25586 / DSM 15643 / BCRC 10681 / CIP 101130 / JCM 8532 / KCTC 2640 / LMG 13131 / VPI 4355).